Consider the following 338-residue polypeptide: Ornithine carbamoyltransferase (338 aa).

Carbamoyl phosphate-binding positions include 56–59 (STRT), arginine 107, and 134–137 (HPTQ). L-ornithine-binding positions include asparagine 168, aspartate 232, and 236–237 (SM). Carbamoyl phosphate contacts are provided by residues 274 to 275 (CL) and arginine 320.

This sequence belongs to the aspartate/ornithine carbamoyltransferase superfamily. OTCase family.

Its subcellular location is the cytoplasm. It carries out the reaction carbamoyl phosphate + L-ornithine = L-citrulline + phosphate + H(+). The protein operates within amino-acid biosynthesis; L-arginine biosynthesis; L-arginine from L-ornithine and carbamoyl phosphate: step 1/3. Reversibly catalyzes the transfer of the carbamoyl group from carbamoyl phosphate (CP) to the N(epsilon) atom of ornithine (ORN) to produce L-citrulline. This chain is Ornithine carbamoyltransferase (argI), found in Buchnera aphidicola subsp. Schizaphis graminum (strain Sg).